Consider the following 225-residue polypeptide: U2 small nuclear ribonucleoprotein B'' (225 aa).

Positions 7 to 86 (HTIYINNMND…KPMRIQYAKT (80 aa)) constitute an RRM 1 domain. The interval 99 to 145 (ADKEKKKEKKKAKTVEQTATTTNKKPGQGTPNSANTQGNSTPNPQVP) is disordered. Lysine 111 carries the post-translational modification N6-acetyllysine; alternate. Residue lysine 111 forms a Glycyl lysine isopeptide (Lys-Gly) (interchain with G-Cter in SUMO2); alternate linkage. Over residues 113–123 (VEQTATTTNKK) the composition is skewed to low complexity. Polar residues predominate over residues 127–141 (GTPNSANTQGNSTPN). Phosphotyrosine is present on tyrosine 151. The 75-residue stretch at 151–225 (YILFLNNLPE…HAMKITYAKK (75 aa)) folds into the RRM 2 domain.

It belongs to the RRM U1 A/B'' family. In terms of assembly, identified in the spliceosome B complex. Identified in the spliceosome C complex. Present in a spliceosome complex assembled in vitro, and composed of SNRPB2, HPRP8BP and CRNKL1. Contributes to the binding of stem loop IV of U2 snRNA with SNRPP1.

It is found in the nucleus. Its function is as follows. Involved in pre-mRNA splicing as component of the spliceosome. Associated with sn-RNP U2, where it contributes to the binding of stem loop IV of U2 snRNA. The protein is U2 small nuclear ribonucleoprotein B'' (SNRPB2) of Homo sapiens (Human).